The following is a 372-amino-acid chain: Spermidine/putrescine import ATP-binding protein PotA (372 aa).

The 231-residue stretch at 13-243 folds into the ABC transporter domain; sequence IKLTGISKSF…PKNLFVARFI (231 aa). 45-52 provides a ligand contact to ATP; that stretch reads GPSGCGKT.

It belongs to the ABC transporter superfamily. Spermidine/putrescine importer (TC 3.A.1.11.1) family. In terms of assembly, the complex is composed of two ATP-binding proteins (PotA), two transmembrane proteins (PotB and PotC) and a solute-binding protein (PotD).

Its subcellular location is the cell inner membrane. It catalyses the reaction ATP + H2O + polyamine-[polyamine-binding protein]Side 1 = ADP + phosphate + polyamineSide 2 + [polyamine-binding protein]Side 1.. In terms of biological role, part of the ABC transporter complex PotABCD involved in spermidine/putrescine import. Responsible for energy coupling to the transport system. The polypeptide is Spermidine/putrescine import ATP-binding protein PotA (Aliivibrio fischeri (strain ATCC 700601 / ES114) (Vibrio fischeri)).